The following is a 101-amino-acid chain: Feather keratin Cos2-3 (101 aa).

Ser2 carries the N-acetylserine modification.

The protein belongs to the avian keratin family. The avian keratins (F-ker, S-ker, C-ker and B-ker) are a complex mixture of very similar polypeptides.

The protein is Feather keratin Cos2-3 of Columba livia (Rock dove).